Here is a 499-residue protein sequence, read N- to C-terminus: Dipeptide and tripeptide permease A (499 aa).

Residues methionine 1–arginine 34 are Cytoplasmic-facing. A helical membrane pass occupies residues phenylalanine 35–serine 55. Over glutamate 56 to serine 59 the chain is Periplasmic. Residues isoleucine 60–leucine 80 traverse the membrane as a helical segment. The Cytoplasmic portion of the chain corresponds to glycine 81 to arginine 89. The helical transmembrane segment at valine 90–histidine 110 threads the bilayer. A topological domain (periplasmic) is located at residue aspartate 111. Residues alanine 112–asparagine 132 form a helical membrane-spanning segment. The Cytoplasmic segment spans residues proline 133 to threonine 153. The chain crosses the membrane as a helical span at residues methionine 154–alanine 174. At glutamate 175 to glycine 178 the chain is on the periplasmic side. The chain crosses the membrane as a helical span at residues tryptophan 179–phenylalanine 199. Over cysteine 200–histidine 217 the chain is Cytoplasmic. Residues valine 218–leucine 238 traverse the membrane as a helical segment. Residues leucine 239–arginine 246 lie on the Periplasmic side of the membrane. A helical transmembrane segment spans residues leucine 247–methionine 267. The Cytoplasmic portion of the chain corresponds to glutamine 268–lysine 274. Residues methionine 275–methionine 295 form a helical membrane-spanning segment. Residues proline 296–glutamine 320 lie on the Periplasmic side of the membrane. A helical transmembrane segment spans residues phenylalanine 321–asparagine 341. Topologically, residues lysine 342 to proline 350 are cytoplasmic. Residues phenylalanine 351–alanine 371 form a helical membrane-spanning segment. At lysine 372–asparagine 383 the chain is on the periplasmic side. A helical membrane pass occupies residues tryptophan 384–leucine 404. Residues alanine 405–arginine 414 lie on the Cytoplasmic side of the membrane. A helical transmembrane segment spans residues leucine 415–glycine 435. The Periplasmic portion of the chain corresponds to lysine 436–arginine 459. A helical membrane pass occupies residues valine 460–proline 480. Residues leucine 481–alanine 499 are Cytoplasmic-facing.

It belongs to the major facilitator superfamily. Proton-dependent oligopeptide transporter (POT/PTR) (TC 2.A.17) family. DtpA subfamily.

It is found in the cell inner membrane. Proton-dependent permease that transports di- and tripeptides. In Cronobacter turicensis (strain DSM 18703 / CCUG 55852 / LMG 23827 / z3032), this protein is Dipeptide and tripeptide permease A.